We begin with the raw amino-acid sequence, 571 residues long: Phosphoenolpyruvate-protein phosphotransferase (571 aa).

Catalysis depends on His207, which acts as the Tele-phosphohistidine intermediate. Arg312 and Arg348 together coordinate phosphoenolpyruvate. The Mg(2+) site is built by Glu435 and Asp459. Phosphoenolpyruvate contacts are provided by residues 458-459 (ND) and Arg469. The Proton donor role is filled by Cys506.

The protein belongs to the PEP-utilizing enzyme family. Homodimer. The cofactor is Mg(2+).

The protein localises to the cytoplasm. It catalyses the reaction L-histidyl-[protein] + phosphoenolpyruvate = N(pros)-phospho-L-histidyl-[protein] + pyruvate. Functionally, general (non sugar-specific) component of the phosphoenolpyruvate-dependent sugar phosphotransferase system (sugar PTS). This major carbohydrate active-transport system catalyzes the phosphorylation of incoming sugar substrates concomitantly with their translocation across the cell membrane. Enzyme I transfers the phosphoryl group from phosphoenolpyruvate (PEP) to the phosphoryl carrier protein (HPr). The protein is Phosphoenolpyruvate-protein phosphotransferase (ptsI) of Chlamydia trachomatis serovar D (strain ATCC VR-885 / DSM 19411 / UW-3/Cx).